Here is a 108-residue protein sequence, read N- to C-terminus: N(4)-acetylcytidine amidohydrolase (108 aa).

Positions 5 to 102 (ITFFQRLERS…NDLFFISFRV (98 aa)) constitute an ASCH domain. The active-site Proton acceptor is K20. The active-site Nucleophile is the T23. E73 (proton donor) is an active-site residue.

Belongs to the N(4)-acetylcytidine amidohydrolase family.

The catalysed reaction is N(4)-acetylcytidine + H2O = cytidine + acetate + H(+). It carries out the reaction N(4)-acetyl-2'-deoxycytidine + H2O = 2'-deoxycytidine + acetate + H(+). The enzyme catalyses N(4)-acetylcytosine + H2O = cytosine + acetate + H(+). Catalyzes the hydrolysis of N(4)-acetylcytidine (ac4C). This is N(4)-acetylcytidine amidohydrolase from Moritella marina (Vibrio marinus).